We begin with the raw amino-acid sequence, 525 residues long: Bifunctional pantoate ligase/cytidylate kinase (525 aa).

The segment at 1-292 is pantoate--beta-alanine ligase; the sequence is MDNVPIIRTV…VGSARLIDNM (292 aa). Residue 44–51 coordinates ATP; sequence MGALHAGH. His51 serves as the catalytic Proton donor. (R)-pantoate is bound at residue Gln75. Residue Gln75 coordinates beta-alanine. ATP is bound at residue 162-165; the sequence is GQKD. Gln168 serves as a coordination point for (R)-pantoate. ATP-binding positions include Ile191 and 199–202; that span reads LSSR. A cytidylate kinase region spans residues 293–525; it reads LLDARLPILA…LYQERFPDRA (233 aa).

This sequence in the N-terminal section; belongs to the pantothenate synthetase family. The protein in the C-terminal section; belongs to the cytidylate kinase family. Type 1 subfamily.

The protein localises to the cytoplasm. The catalysed reaction is (R)-pantoate + beta-alanine + ATP = (R)-pantothenate + AMP + diphosphate + H(+). It carries out the reaction CMP + ATP = CDP + ADP. The enzyme catalyses dCMP + ATP = dCDP + ADP. Its pathway is cofactor biosynthesis; (R)-pantothenate biosynthesis; (R)-pantothenate from (R)-pantoate and beta-alanine: step 1/1. In terms of biological role, catalyzes the condensation of pantoate with beta-alanine in an ATP-dependent reaction via a pantoyl-adenylate intermediate. Catalyzes the transfer of a phosphate group from ATP to either CMP or dCMP to form CDP or dCDP and ADP, respectively. The sequence is that of Bifunctional pantoate ligase/cytidylate kinase from Acaryochloris marina (strain MBIC 11017).